The sequence spans 191 residues: Protein Ves (191 aa).

It belongs to the Ves family.

In Escherichia coli (strain ATCC 8739 / DSM 1576 / NBRC 3972 / NCIMB 8545 / WDCM 00012 / Crooks), this protein is Protein Ves.